The following is a 1150-amino-acid chain: BAI1-associated protein 3 (1150 aa).

Residues 22-44 (RRKTEQEPEVTNSQEPPTGAWKP) are disordered. The C2 1 domain occupies 139–298 (SSEEHMEAIM…VKSARANGTA (160 aa)). D174 and D180 together coordinate Ca(2+). Residues 193-214 (APQEPSGQKEQRFGFRKGSKRS) are disordered. Residues D258 and D260 each contribute to the Ca(2+) site. One can recognise an MHD1 domain in the interval 626-747 (FELYLTLADT…EASLFYTELL (122 aa)). In terms of domain architecture, MHD2 spans 851–959 (DEAVAPLLKY…CSTRECIEQF (109 aa)). Positions 973–1099 (RFGRLTVRCH…GIARPHVGGG (127 aa)) constitute a C2 2 domain. 7 residues coordinate Ca(2+): L1003, D1004, D1010, D1068, D1070, S1073, and D1076.

This sequence belongs to the unc-13 family. As to quaternary structure, interacts with ADGRB1, this interaction is direct. Interacts with endosomal SNARE proteins VAMP3, VAMP4, STX6 and STX16; this interaction is increased in the presence of calcium. Ca(2+) serves as cofactor. Prominently expressed in brain structures including hypothalamus, amygdala, stria terminalis and periaqueductal gray (at protein level). Expressed in nonneuronal tissues, including placenta, lung, pancreas, spleen, and testes. Within placenta, expression is restricted to the syncytiotrophoblasts.

It localises to the cytoplasm. The protein localises to the cytosol. It is found in the recycling endosome membrane. The protein resides in the late endosome membrane. Its subcellular location is the golgi apparatus. It localises to the trans-Golgi network membrane. The protein localises to the cell membrane. Functionally, functions in endosome to Golgi retrograde transport. In response to calcium influx, may interact with SNARE fusion receptors and membrane phospholipids to mediate endosome fusion with the trans-Golgi network. By promoting the recycling of secretory vesicle transmembrane proteins, it indirectly controls dense-core secretory vesicle biogenesis, maturation and their ability to mediate the constitutive and regulated secretion of neurotransmitters and hormones. May regulate behavior and food intake by controlling calcium-stimulated exocytosis of neurotransmitters including NPY and serotonin and hormones like insulin. Proposed to play a role in hypothalamic neuronal firing by modulating gamma-aminobutyric acid (GABA)ergic inhibitory neurotransmission. This chain is BAI1-associated protein 3, found in Mus musculus (Mouse).